The following is a 282-amino-acid chain: Bis(5'-nucleosyl)-tetraphosphatase, symmetrical (282 aa).

It belongs to the Ap4A hydrolase family.

It catalyses the reaction P(1),P(4)-bis(5'-adenosyl) tetraphosphate + H2O = 2 ADP + 2 H(+). Functionally, hydrolyzes diadenosine 5',5'''-P1,P4-tetraphosphate to yield ADP. The protein is Bis(5'-nucleosyl)-tetraphosphatase, symmetrical of Salmonella paratyphi C (strain RKS4594).